Here is a 531-residue protein sequence, read N- to C-terminus: MSAKEKFTSISPAEFFKRNPELAGFSNPARAMYQALRELVENALDATDVHEILPSIKVIIERTSQEKEIYRLTVEDNGIGIPPHVVPDAFGRVLYSSKYVLRQTRGMYGLGVKAAVLYSQMYQDKPIEITTAPLNSKRIYSFKLKIDVTKNEPIIYERGSVNNDTGYHGTSVSMYILGDWMRAKSRVYEYIKRTYIITPYAEFYFKDPEGNVVLYPRLTNKMPVPPKEVKPHPYGVDIELLKNMISRQKEDTTVKEFLVKEFQSVGEKTALSVIEMAGLDPDKRVQKLTDDQLSKLVDAMKNFPDFRPPSPEALSTIGADLIELGLKQTFNPEYVGAVTRRPKAYQGHPFIVEVGLAYGGDIQPSEEPTVLRYANKIPLIYDEKSDVVWKVVEEIDWKRYGIEDEQLPLVVMVHLCSTKVPYKSAGKESIADVEEIEKEIRNGIMEASRSLKTFMTEKRKEEEARKRLLTYLKYIPELARSLSIFVTDGKKELAPKVQEEIQNKMIDLVVTKLNIKDKDLELFKSYRVETL.

Residues Asn-42, Asp-76, 97-98 (SK), 106-113 (GMYGLGVK), and Lys-427 contribute to the ATP site.

The protein belongs to the TOP6B family. As to quaternary structure, homodimer. Heterotetramer of two Top6A and two Top6B chains.

It catalyses the reaction ATP-dependent breakage, passage and rejoining of double-stranded DNA.. Relaxes both positive and negative superturns and exhibits a strong decatenase activity. The sequence is that of Type 2 DNA topoisomerase 6 subunit B from Metallosphaera sedula (strain ATCC 51363 / DSM 5348 / JCM 9185 / NBRC 15509 / TH2).